The chain runs to 249 residues: dTDP-4-amino-2,3,4,6-tetradeoxy-D-glucose N,N-dimethyltransferase (249 aa).

Substrate is bound at residue R30. S-adenosyl-L-methionine contacts are provided by residues A59, E80, and 102 to 103 (DI). Substrate-binding positions include T165, 178–182 (RLSHS), and R241.

Belongs to the methyltransferase TylM1/DesVI family. As to quaternary structure, homodimer. It depends on Mg(2+) as a cofactor.

The enzyme catalyses dTDP-4-amino-2,3,4,6-tetradeoxy-alpha-D-erythro-hexopyranose + 2 S-adenosyl-L-methionine = dTDP-alpha-D-forosamine + 2 S-adenosyl-L-homocysteine + 2 H(+). Functionally, involved in the biosynthesis of forosamine ((4-dimethylamino)-2,3,4,6-tetradeoxy-alpha-D-threo-hexopyranose), a highly deoxygenated sugar component of several bioactive natural products such as the insecticidal spinosyns A and D. Catalyzes the dimethylation of the C-4 amino group from dTDP-4-amino-2,3,4,6-tetradeoxy-alpha-D-glucose to yield dTDP-D-forosamine. The polypeptide is dTDP-4-amino-2,3,4,6-tetradeoxy-D-glucose N,N-dimethyltransferase (Saccharopolyspora spinosa).